We begin with the raw amino-acid sequence, 352 residues long: tRNA-specific 2-thiouridylase MnmA (352 aa).

Residues 7 to 14 and Leu33 each bind ATP; that span reads GLSGGVDS. The active-site Nucleophile is the Cys94. Cys94 and Cys193 are joined by a disulfide. Gly119 lines the ATP pocket. Positions 143 to 145 are interaction with tRNA; the sequence is KDQ. Cys193 acts as the Cysteine persulfide intermediate in catalysis. Residues 298 to 299 form an interaction with tRNA region; sequence RY.

Belongs to the MnmA/TRMU family.

It is found in the cytoplasm. It carries out the reaction S-sulfanyl-L-cysteinyl-[protein] + uridine(34) in tRNA + AH2 + ATP = 2-thiouridine(34) in tRNA + L-cysteinyl-[protein] + A + AMP + diphosphate + H(+). Functionally, catalyzes the 2-thiolation of uridine at the wobble position (U34) of tRNA, leading to the formation of s(2)U34. This is tRNA-specific 2-thiouridylase MnmA from Microcystis aeruginosa (strain NIES-843 / IAM M-2473).